Here is a 242-residue protein sequence, read N- to C-terminus: ATP synthase subunit a (242 aa).

A run of 5 helical transmembrane segments spans residues 21-41 (LASV…AIVC), 83-103 (AVTL…FAIV), 118-137 (ATVT…YYGI), 175-195 (LYGN…LFFE), and 198-218 (AWGW…SIFV).

Belongs to the ATPase A chain family. As to quaternary structure, F-type ATPases have 2 components, CF(1) - the catalytic core - and CF(0) - the membrane proton channel. CF(1) has five subunits: alpha(3), beta(3), gamma(1), delta(1), epsilon(1). CF(0) has three main subunits: a(1), b(2) and c(9-12). The alpha and beta chains form an alternating ring which encloses part of the gamma chain. CF(1) is attached to CF(0) by a central stalk formed by the gamma and epsilon chains, while a peripheral stalk is formed by the delta and b chains.

The protein localises to the cell membrane. In terms of biological role, key component of the proton channel; it plays a direct role in the translocation of protons across the membrane. In Staphylococcus epidermidis (strain ATCC 35984 / DSM 28319 / BCRC 17069 / CCUG 31568 / BM 3577 / RP62A), this protein is ATP synthase subunit a.